The primary structure comprises 129 residues: Ig kappa chain V-IV region S107B (129 aa).

The first 22 residues, 1 to 22 (MDLQVQIIXFLLISVTVIMSRG), serve as a signal peptide directing secretion. Residues 23-45 (ENVLTQSPAIMAASLGQKVTMTC) are framework-1. Cysteine 45 and cysteine 111 form a disulfide bridge. The complementarity-determining-1 stretch occupies residues 46 to 57 (SASSSVSSSYLH). Residues 58-72 (WYQQKSGASPKPLIH) are framework-2. Residues 73-79 (RTSNLAS) form a complementarity-determining-2 region. The interval 80-111 (GVPARFSGSGSGTSYSLTISSVEAEDDATYYC) is framework-3. The segment at 112–118 (QQWSGYP) is complementarity-determining-3. Residues 119-128 (FGSGTKLEIK) are framework-4.

The sequence is that of Ig kappa chain V-IV region S107B from Mus musculus (Mouse).